A 629-amino-acid polypeptide reads, in one-letter code: tRNA uridine 5-carboxymethylaminomethyl modification enzyme MnmG (629 aa).

FAD contacts are provided by residues 14–19, Val126, and Ser181; that span reads GAGHAG. NAD(+) is bound at residue 273–287; sequence GPRYCPSIEDKVVRF. FAD is bound at residue Gln370.

Belongs to the MnmG family. In terms of assembly, homodimer. Heterotetramer of two MnmE and two MnmG subunits. FAD serves as cofactor.

The protein resides in the cytoplasm. NAD-binding protein involved in the addition of a carboxymethylaminomethyl (cmnm) group at the wobble position (U34) of certain tRNAs, forming tRNA-cmnm(5)s(2)U34. The sequence is that of tRNA uridine 5-carboxymethylaminomethyl modification enzyme MnmG from Bacillus cereus (strain ZK / E33L).